We begin with the raw amino-acid sequence, 61 residues long: Small ribosomal subunit protein uS14 (61 aa).

4 residues coordinate Zn(2+): Cys24, Cys27, Cys40, and Cys43.

This sequence belongs to the universal ribosomal protein uS14 family. Zinc-binding uS14 subfamily. In terms of assembly, part of the 30S ribosomal subunit. Contacts proteins S3 and S10. The cofactor is Zn(2+).

Binds 16S rRNA, required for the assembly of 30S particles and may also be responsible for determining the conformation of the 16S rRNA at the A site. The chain is Small ribosomal subunit protein uS14 from Syntrophobacter fumaroxidans (strain DSM 10017 / MPOB).